A 185-amino-acid chain; its full sequence is uncharacterized protein (185 aa).

This sequence to M.thermoautotrophicum MTH236.

This is an uncharacterized protein from Methanocaldococcus jannaschii (strain ATCC 43067 / DSM 2661 / JAL-1 / JCM 10045 / NBRC 100440) (Methanococcus jannaschii).